The chain runs to 336 residues: MAKKYALFIALILVVSYFSLTSGSFSVRPAELLSTLFQIDPNPQYEILLFDLRLPRVVMAAIIGLGLGIAGAVIQAITRNGLADPGILGINAGAGAGIVAFMLLFQGQKEVTSIAAAMGMPLFGLIGGLIAAILIYIFAWHRGNLDSGRIILVGIAINSGFSALSLFLSLKMDPQDYQMAMVWKNGSIWSANWTYITAVLPWMLLFIPILIGKSRLLDTIRFDEDTVRSLGISSNKEKTILLVACVAIISACVSVAGSMAFVGLIAPHISRRLAGVEHRYILPLSGLIGMLLVISADFAGKLFFQPAEVPAGIILAILGVPYFLYLLFKQKKGENA.

9 helical membrane passes run 7–27 (LFIA…SFSV), 57–77 (VVMA…IQAI), 85–105 (PGIL…MLLF), 120–140 (MPLF…IFAW), 150–170 (IILV…FLSL), 191–211 (ANWT…PILI), 246–266 (VAII…GLIA), 280–300 (YILP…DFAG), and 308–328 (EVPA…YLLF).

This sequence belongs to the binding-protein-dependent transport system permease family. FecCD subfamily. The complex is composed of one ATP-binding protein (YusV), two transmembrane proteins (FeuB and FeuC) and a solute-binding protein (FeuA).

It is found in the cell membrane. In terms of biological role, involved in the uptake of iron. Probably responsible for the translocation of the substrate across the membrane. Its function is as follows. Part of the ABC transporter complex FeuABC/YusV involved in import of the catecholate siderophores bacillibactin and enterobactin. This chain is Iron-uptake system permease protein FeuC (feuC), found in Bacillus subtilis (strain 168).